The following is a 540-amino-acid chain: Probable protein kinase UbiB (540 aa).

Residues 24–44 traverse the membrane as a helical segment; that stretch reads LLFEQPLLPWWLASLRLLMPW. A Protein kinase domain is found at 126–494; sequence RFDVEPLASA…RRRQGDRWAL (369 aa). ATP-binding positions include 132–140 and Lys154; that span reads LASASVAQV. Asp289 functions as the Proton acceptor in the catalytic mechanism. 2 helical membrane-spanning segments follow: residues 496–516 and 518–538; these read LLGA…AEAA and LAAP…YLIV.

Belongs to the ABC1 family. UbiB subfamily.

It localises to the cell inner membrane. The protein operates within cofactor biosynthesis; ubiquinone biosynthesis [regulation]. In terms of biological role, is probably a protein kinase regulator of UbiI activity which is involved in aerobic coenzyme Q (ubiquinone) biosynthesis. This is Probable protein kinase UbiB from Pseudomonas putida (strain GB-1).